The sequence spans 2126 residues: Serine/threonine-protein kinase WNK1 (2126 aa).

Disordered regions lie at residues 1 to 80 and 93 to 202; these read MSDG…FFRR and LPGL…QQQD. A Phosphoserine modification is found at Ser-17. Positions 48–64 are enriched in basic and acidic residues; that stretch reads RTEEYRRRRHTMDKDSR. At Thr-58 the chain carries Phosphothreonine. 2 stretches are compositionally biased toward low complexity: residues 101 to 111 and 127 to 141; these read PQPSVPAVVPQ and VASQ…AASP. Ser-165 and Ser-172 each carry phosphoserine. A Protein kinase domain is found at 221–479; sequence LKFDIEIGRG…IKDLLNHAFF (259 aa). Ser-231 is a binding site for ATP. 2 residues coordinate chloride: Phe-283 and Leu-299. ATP is bound by residues 301–304 and Lys-351; that span reads TELM. Catalysis depends on Asp-368, which acts as the Proton acceptor. Residues Leu-369 and Leu-371 each contribute to the chloride site. Phosphoserine; by autocatalysis is present on residues Ser-378 and Ser-382. Residues 488-555 are autoinhibitory domain; that stretch reads ELAEEDDGEK…VCEGDHKTMA (68 aa). Residues 573–588 show a composition bias toward basic and acidic residues; the sequence is QLVREEQEKRKQEESS. The tract at residues 573 to 865 is disordered; the sequence is QLVREEQEKR…SRHEKTSRPK (293 aa). Residues 593 to 614 show a composition bias toward polar residues; it reads NEQQASVSQAGIQPLSVASTGI. Low complexity predominate over residues 615–626; that stretch reads PTAPTTSASVST. The interaction with KLHL3 stretch occupies residues 629–639; sequence EPEEPEADQHQ. 3 stretches are compositionally biased toward polar residues: residues 638-682, 695-705, and 713-733; these read HQQL…GSQH, TVSSIQAQSQP, and SMAQ…VLSS. Over residues 734–746 the composition is skewed to low complexity; the sequence is QPVQHPQQQGIQP. The segment covering 750–789 has biased composition (polar residues); sequence PQQAVQYSLPQAASSSEGTVQPVSQPQVSAGTQSSTQGVS. Residues 793–823 show a composition bias toward low complexity; the sequence is PPEQTPITQSQPTQPVPLVSSVDSAHSDVAS. A compositionally biased stretch (polar residues) spans 826-836; the sequence is SDGNENAPSSS. The span at 844-865 shows a compositional bias: basic residues; sequence TKRHYRKSVRSRSRHEKTSRPK. Residues 1003–1006 carry the RFXV motif 1 motif; that stretch reads RFIV. The residue at position 1007 (Ser-1007) is a Phosphoserine. Disordered stretches follow at residues 1474–1507 and 1557–1595; these read GQVS…LTKT and IPVT…ASSS. A compositionally biased stretch (low complexity) spans 1477–1496; the sequence is STPGTHASAPASTATGAKPG. The segment covering 1567–1583 has biased composition (polar residues); sequence STMSSTAVTEAGSQPQK. The short motif at 1604 to 1607 is the RFXV motif 2 element; the sequence is RFQV. The disordered stretch occupies residues 1610-1695; it reads TMDDAQKERK…TKVGRFQVTT (86 aa). Basic and acidic residues predominate over residues 1613–1629; that stretch reads DAQKERKNRSEDTKSVH. The span at 1632–1650 shows a compositional bias: low complexity; sequence SSTSESSVLSSSSPESTLV. 2 short sequence motifs (RFXV motif) span residues 1690–1693 and 1702–1705; these read RFQV and RFSV. Over residues 1709–1719 the composition is skewed to basic and acidic residues; that stretch reads EDKVTELKKEG. Disordered stretches follow at residues 1709–1783, 1856–1940, and 1952–1990; these read EDKV…LCSK, VIIP…NLYS, and SLSA…KGTF. Ser-1723 carries the post-translational modification Phosphoserine. Over residues 1738–1747 the composition is skewed to basic and acidic residues; it reads PKKEKPELAE. Phosphoserine is present on residues Ser-1755, Ser-1756, Ser-1771, Ser-1773, Ser-1776, and Ser-1865. A compositionally biased stretch (basic residues) spans 1866–1878; sequence GRRRRPTKSKGSK. The span at 1879–1889 shows a compositional bias: low complexity; it reads SSRSSSLGNKS. A compositionally biased stretch (polar residues) spans 1890–1940; the sequence is PQLSGNLSGQSGTSVLNPQQTLHPPGNTPETGHNQLLQPLKPSPSSDNLYS. Over residues 1957–1981 the composition is skewed to low complexity; the sequence is GQGTSSTNTVGGTVSSQAAQAQPPA. Residues 1985–2005 are amphipathic alpha-helix; sequence SRKGTFTDDLHKLVDNWARDA. Ser-2014 and Ser-2030 each carry phosphoserine. The segment at 2076 to 2097 is disordered; the sequence is PFGTQWSGTGGPAPQPLGQFQP. Phosphoserine is present on residues Ser-2114 and Ser-2116.

Belongs to the protein kinase superfamily. Ser/Thr protein kinase family. WNK subfamily. As to quaternary structure, interacts with WNK3. Interacts with WNK4; inhibiting the activity of WNK4. Interacts with SGK1; promoting its activation. Associates with the mTORC2 complex. Interacts with UVRAG. Interacts (via amphipathic alpha-helix region) with EMC2; promoting the ER membrane protein complex assembly. In terms of assembly, interacts with isoform 1; inhibiting isoform 1 activity. Mg(2+) serves as cofactor. In terms of processing, autophosphorylated at Ser-378 and Ser-382, promoting its activity. Autophosphorylation at Ser-382 is inhibited by intracellular calcium. Phosphorylation at Thr-58 increases ability to activate SGK1. Ubiquitinated by the BCR(KLHL3) complex, leading to its degradation. Also ubiquitinated by the BCR(KLHL2) complex. Post-translationally, may be O-glycosylated.

Its subcellular location is the cytoplasm. It localises to the nucleus. The protein localises to the cytoskeleton. It is found in the spindle. The enzyme catalyses L-seryl-[protein] + ATP = O-phospho-L-seryl-[protein] + ADP + H(+). The catalysed reaction is L-threonyl-[protein] + ATP = O-phospho-L-threonyl-[protein] + ADP + H(+). Activated in response to hyperosmotic stress: cell shrinkage promotes formation of a membraneless compartment that concentrates WNK1 with its substrates, OXSR1/OSR1 and STK39/SPAK. Activation requires autophosphorylation of Ser-382 and, to a lower extent, Ser-378. Autophosphorylation and subsequent activation is inhibited by increases in intracellular ionic strength: Cl(-) potently inhibits WNK1 kinase activity via direct binding. Also inhibited by K(+) ions. Inhibited by Compound 12 ((5-Chloro-2-(2-((methyl-d3)amino)thiazol-4-yl)- pyridin-4-yl)(4-(4-chlorobenzyl)piperazin-1-yl)methanone). Serine/threonine-protein kinase component of the WNK1-SPAK/OSR1 kinase cascade, which acts as a key regulator of blood pressure and regulatory volume increase by promoting ion influx. WNK1 mediates regulatory volume increase in response to hyperosmotic stress by acting as a molecular crowding sensor, which senses cell shrinkage and mediates formation of a membraneless compartment by undergoing liquid-liquid phase separation. The membraneless compartment concentrates WNK1 with its substrates, OXSR1/OSR1 and STK39/SPAK, promoting WNK1-dependent phosphorylation and activation of downstream kinases OXSR1/OSR1 and STK39/SPAK. Following activation, OXSR1/OSR1 and STK39/SPAK catalyze phosphorylation of ion cotransporters SLC12A1/NKCC2, SLC12A2/NKCC1, SLC12A5/KCC2 and SLC12A6/KCC3, regulating their activity. Phosphorylation of Na-K-Cl cotransporters SLC12A2/NKCC1 and SLC12A2/NKCC1 promote their activation and ion influx; simultaneously, phosphorylation of K-Cl cotransporters SLC12A5/KCC2 and SLC12A6/KCC3 inhibit their activity, blocking ion efflux. Also acts as a regulator of angiogenesis in endothelial cells. Also acts independently of the WNK1-SPAK/OSR1 kinase cascade by catalyzing phosphorylation of other substrates, such as SYT2, PCF11 and NEDD4L. Mediates phosphorylation of SYT2, regulating SYT2 association with phospholipids and membrane-binding. Regulates mRNA export in the nucleus by mediating phosphorylation of PCF11, thereby decreasing the association between PCF11 and POLR2A/RNA polymerase II and promoting mRNA export to the cytoplasm. Acts as a negative regulator of autophagy. Required for the abscission step during mitosis, independently of the WNK1-SPAK/OSR1 kinase cascade. WNK1 may also play a role in actin cytoskeletal reorganization. Also acts as a scaffold protein independently of its protein kinase activity: negatively regulates cell membrane localization of various transporters and channels, such as SLC4A4, SLC26A6, SLC26A9, TRPV4 and CFTR. Involved in the regulation of epithelial Na(+) channel (ENaC) by promoting activation of SGK1 in a kinase-independent manner. Probably activates SGK1 by acting as a scaffold protein that promotes the recruitment of SGK1 to the mTORC2 complex in response to chloride, leading to mTORC2-dependent phosphorylation and activation of SGK1. Acts as an assembly factor for the ER membrane protein complex independently of its protein kinase activity: associates with EMC2 in the cytoplasm via its amphipathic alpha-helix, and prevents EMC2 ubiquitination and subsequent degradation, thereby promoting EMC2 stabilization. In terms of biological role, kinase-defective isoform specifically expressed in kidney, which acts as a dominant-negative regulator of the longer isoform 1. Does not directly inhibit WNK4 and has no direct effect on sodium and chloride ion transport. Down-regulates sodium-chloride cotransporter activity indirectly by inhibiting isoform 1, it associates with isoform 1 and attenuates its kinase activity. In kidney, may play an important role regulating sodium and potassium balance. Its function is as follows. Kinase-defective isoform produced by alternative promoter usage and alternative splicing. This is Serine/threonine-protein kinase WNK1 from Rattus norvegicus (Rat).